The chain runs to 74 residues: Protein krueppel (74 aa).

4 consecutive C2H2-type zinc fingers follow at residues 1 to 4 (ERTH), 10 to 32 (FECP…MRLH), 38 to 60 (YHCS…LRVH), and 66 to 74 (YTCEICDGK).

The protein belongs to the krueppel C2H2-type zinc-finger protein family.

The protein localises to the nucleus. Krueppel is a gap class segmentation protein. The chain is Protein krueppel (Kr) from Musca domestica (House fly).